Here is a 1445-residue protein sequence, read N- to C-terminus: ABC-type transporter FGSG_00046 (1445 aa).

11 helical membrane passes run 21–41 (LFEE…MLLV), 77–97 (LILW…AAAL), 119–138 (PSSL…VTRV), 150–170 (ISIL…FESL), 187–207 (EIVG…FILG), 255–277 (TLLR…PLLL), 297–317 (YGLI…TALA), 368–388 (LQFV…IFLL), 392–412 (VALG…GTVL), 481–501 (VFST…YVLM), and 520–540 (SLFS…PAIF). The ABC transmembrane type-1 1 domain maps to 259 to 541 (GGLCRLFTAL…FLTSVPAIFS (283 aa)). Residues 595–821 (IRDGSVRWKG…DEIEASTYSR (227 aa)) enclose the ABC transporter 1 domain. ATP is bound at residue 627-634 (GSVGSGKS). Residues 803–850 (RNTQKDMQDDEIEASTYSREQNGPKKQEEDANHESNQSPETSQEHELA) form a disordered region. The segment covering 824 to 835 (NGPKKQEEDANH) has biased composition (basic and acidic residues). The next 6 helical transmembrane spans lie at 868-888 (GMGF…WQNF), 912-932 (IGVY…VTWF), 1004-1024 (IPLT…QLVM), 1026-1046 (SIGT…LAII), 1116-1136 (LTLV…GVTI), and 1147-1167 (IGLA…LLTW). The region spanning 974-1173 (HRAPMSYFES…LLTWWTMMEA (200 aa)) is the ABC transmembrane type-1 2 domain. The ABC transporter 2 domain maps to 1210-1441 (IELKELSASY…DVSLFQDLFS (232 aa)). 1244–1251 (GRTGSGKT) serves as a coordination point for ATP.

Belongs to the ABC transporter superfamily. ABCC family.

Its subcellular location is the cell membrane. Its function is as follows. ABC-type transporter; part of the gene cluster that mediates the biosynthesis of gramillins A and B, bicyclic lipopeptides that induce cell death in maize leaves but not in wheat leaves. May be involved in the secretion of gramillins. The sequence is that of ABC-type transporter FGSG_00046 from Gibberella zeae (strain ATCC MYA-4620 / CBS 123657 / FGSC 9075 / NRRL 31084 / PH-1) (Wheat head blight fungus).